The primary structure comprises 468 residues: Factor XIIa inhibitor (468 aa).

An N-terminal signal peptide occupies residues 1-23; that stretch reads MASRLTPLTLLLLLLLAGDRVTS. The segment at 27 to 60 is disordered; sequence VGPGNLQEGESEGDSQKGGILDGESIQGNEDSPT. N65, N176, N227, and N326 each carry an N-linked (GlcNAc...) asparagine glycan. Disulfide bonds link C97/C396 and C104/C179.

Belongs to the serpin family. In terms of processing, N- and O-glycosylated.

It is found in the secreted. Its function is as follows. May play a potentially crucial role in regulating important physiological pathways including complement activation, blood coagulation, fibrinolysis and the generation of kinins. The protein is Factor XIIa inhibitor of Bos taurus (Bovine).